A 188-amino-acid polypeptide reads, in one-letter code: Ribosome maturation factor RimP (188 aa).

Belongs to the RimP family.

The protein localises to the cytoplasm. Its function is as follows. Required for maturation of 30S ribosomal subunits. The polypeptide is Ribosome maturation factor RimP (Corynebacterium aurimucosum (strain ATCC 700975 / DSM 44827 / CIP 107346 / CN-1) (Corynebacterium nigricans)).